Consider the following 428-residue polypeptide: Nocturnin (428 aa).

Residues 1–72 (MYQSPRRLCS…PMGNGTSRLY (72 aa)) constitute a mitochondrion transit peptide. The tract at residues 21-66 (RRTLVPGPRRTLAPPVLGSRPASPQLQAAASGAARSRPRTVSPMGN) is disordered. A compositionally biased stretch (low complexity) spans 39–55 (SRPASPQLQAAASGAAR). Mg(2+) is bound at residue glutamate 192. Residues glutamate 192, 216-218 (KPW), asparagine 260, 283-286 (HLKA), and 321-323 (DFN) each bind substrate. The segment at 340-350 (NLNSAYKLLSP) is interaction with PPARG. Residue histidine 411 coordinates substrate.

This sequence belongs to the CCR4/nocturin family. In terms of assembly, interacts with PPARG. Requires Mg(2+) as cofactor.

The protein localises to the cytoplasm. The protein resides in the nucleus. Its subcellular location is the perinuclear region. It localises to the mitochondrion. It carries out the reaction NADP(+) + H2O = phosphate + NAD(+). The catalysed reaction is NADPH + H2O = phosphate + NADH. Its function is as follows. Phosphatase which catalyzes the conversion of NADP(+) to NAD(+) and of NADPH to NADH. Shows a small preference for NADPH over NADP(+). Represses translation and promotes degradation of target mRNA molecules. Plays an important role in post-transcriptional regulation of metabolic genes under circadian control. Exerts a rhythmic post-transcriptional control of genes necessary for metabolic functions including nutrient absorption, glucose/insulin sensitivity, lipid metabolism, adipogenesis, inflammation and osteogenesis. Plays an important role in favoring adipogenesis over osteoblastogenesis and acts as a key regulator of the adipogenesis/osteogenesis balance. Promotes adipogenesis by facilitating PPARG nuclear translocation which activates its transcriptional activity. Regulates circadian expression of NOS2 in the liver and negatively regulates the circadian expression of IGF1 in the bone. Critical for proper development of early embryos. This chain is Nocturnin, found in Rattus norvegicus (Rat).